Here is a 728-residue protein sequence, read N- to C-terminus: Protein Hook homolog 1 (728 aa).

Residue Met-1 is modified to N-acetylmethionine. Positions 1 to 555 (MEDPQPLPQS…LKQKLEAHME (555 aa)) are sufficient for interaction with microtubules. A Calponin-homology (CH) domain is found at 12-128 (LPLCDSLIIW…RLLQLILGCA (117 aa)). Coiled-coil stretches lie at residues 168–443 (PASD…LNQA) and 477–658 (LRLQ…AKLR). Ser-235 bears the Phosphoserine mark. The disordered stretch occupies residues 481 to 510 (QEGTENERIEQLQEQLEQKHRKMNELETEQ). Positions 657 to 728 (LRDYEEKLIV…SVKVPAAASD (72 aa)) are sufficient for interaction with AKTIP and VPS18. Phosphoserine is present on residues Ser-719 and Ser-727.

The protein belongs to the hook family. Self-associates. Component of the FTS/Hook/FHIP complex (FHF complex), composed of AKTIP/FTS, FHIP1B, and one or more members of the Hook family of proteins HOOK1, HOOK2, and HOOK3. Interacts directly with AKTIP/FTS, HOOK2 and HOOK3. Associates with several subunits of the homotypic vesicular sorting complex (the HOPS complex) including VPS16, VPS18, VPS39 and VPS41; these interactions may be indirect. Interacts with CCDC181. Interacts (via coiled-coil region) with RIMBP3 (via C-terminus). Interacts with LRGUK (via guanylate kinase-like domain). Interacts with microtubules. May interacts with CLN3. Interacts with AP4M1; the interaction is direct, mediates the interaction between FTS-Hook-FHIP (FHF) complex and AP-4 and the perinuclear distribution of AP-4. In terms of tissue distribution, mainly expressed in testis.

It is found in the cytoplasm. The protein localises to the cytoskeleton. Its function is as follows. Component of the FTS/Hook/FHIP complex (FHF complex). The FHF complex may function to promote vesicle trafficking and/or fusion via the homotypic vesicular protein sorting complex (the HOPS complex). FHF complex promotes the distribution of AP-4 complex to the perinuclear area of the cell. Required for spermatid differentiation. Probably involved in the positioning of the microtubules of the manchette and the flagellum in relation to the membrane skeleton. The protein is Protein Hook homolog 1 (Hook1) of Mus musculus (Mouse).